Consider the following 160-residue polypeptide: MSVVKEPTLADFYVRKKLYTGMGHNYYGEPAWPNDLLYMFPVVILGTLFCLVSLAVLETGSIGDASDPFKTPEEILPEWYFYPVFQILRTVPSKLIGILLMAGVPVGLATVPFIENINQFQNPFRRPIASAVFLFGTLVAIWLGIGATLPIDISLTLGLF.

A run of 3 helical transmembrane segments spans residues 36–56 (LLYM…SLAV), 95–115 (LIGI…PFIE), and 131–151 (AVFL…TLPI).

Belongs to the cytochrome b family. PetD subfamily. The 4 large subunits of the cytochrome b6-f complex are cytochrome b6, subunit IV (17 kDa polypeptide, petD), cytochrome f and the Rieske protein, while the 4 small subunits are petG, petL, petM and petN. The complex functions as a dimer.

The protein localises to the plastid. Its subcellular location is the chloroplast thylakoid membrane. In terms of biological role, component of the cytochrome b6-f complex, which mediates electron transfer between photosystem II (PSII) and photosystem I (PSI), cyclic electron flow around PSI, and state transitions. This Bigelowiella natans (Pedinomonas minutissima) protein is Cytochrome b6-f complex subunit 4.